Here is a 118-residue protein sequence, read N- to C-terminus: Large ribosomal subunit protein bL19 (118 aa).

This sequence belongs to the bacterial ribosomal protein bL19 family.

In terms of biological role, this protein is located at the 30S-50S ribosomal subunit interface and may play a role in the structure and function of the aminoacyl-tRNA binding site. This is Large ribosomal subunit protein bL19 from Hahella chejuensis (strain KCTC 2396).